We begin with the raw amino-acid sequence, 184 residues long: Oocyte-secreted protein 4A (184 aa).

Residues 1-19 (MKISCVLGKLLMLFELIHG) form the signal peptide. Asparagine 128 carries an N-linked (GlcNAc...) asparagine glycan.

The protein belongs to the PLAC1 family.

The protein localises to the secreted. This Homo sapiens (Human) protein is Oocyte-secreted protein 4A.